Consider the following 182-residue polypeptide: Translation initiation factor IF-3 (182 aa).

The segment at 1–22 (MPLGDCNISTPDNKQNRKNQEI) is disordered.

Belongs to the IF-3 family. In terms of assembly, monomer.

The protein resides in the cytoplasm. IF-3 binds to the 30S ribosomal subunit and shifts the equilibrium between 70S ribosomes and their 50S and 30S subunits in favor of the free subunits, thus enhancing the availability of 30S subunits on which protein synthesis initiation begins. This chain is Translation initiation factor IF-3, found in Xanthomonas campestris pv. campestris (strain ATCC 33913 / DSM 3586 / NCPPB 528 / LMG 568 / P 25).